The primary structure comprises 700 residues: Myotubularin-related protein 11 (700 aa).

The interval 1–39 (MWWGGRGQSFNIAPQKEEPEMGLSGPKSNPGNRMPEPSS) is disordered. Positions 201–644 (LETLEDWETE…PQIRFWKRCY (444 aa)) constitute a Myotubularin phosphatase domain.

It belongs to the protein-tyrosine phosphatase family. Non-receptor class myotubularin subfamily.

In Mus musculus (Mouse), this protein is Myotubularin-related protein 11 (Mtmr11).